Consider the following 94-residue polypeptide: Large ribosomal subunit protein bL28 (94 aa).

The segment at 1–21 (MARRCEVTGRGTVSGNNVSHS) is disordered. Over residues 11–20 (GTVSGNNVSH) the composition is skewed to polar residues.

The protein belongs to the bacterial ribosomal protein bL28 family.

In Leptospira interrogans serogroup Icterohaemorrhagiae serovar copenhageni (strain Fiocruz L1-130), this protein is Large ribosomal subunit protein bL28.